The sequence spans 155 residues: Small ribosomal subunit protein uS7c (155 aa).

It belongs to the universal ribosomal protein uS7 family. Part of the 30S ribosomal subunit.

The protein resides in the plastid. Functionally, one of the primary rRNA binding proteins, it binds directly to 16S rRNA where it nucleates assembly of the head domain of the 30S subunit. The protein is Small ribosomal subunit protein uS7c (rps7) of Aneura mirabilis (Parasitic liverwort).